The chain runs to 633 residues: 1-deoxy-D-xylulose-5-phosphate synthase (633 aa).

The interval 1-22 is disordered; that stretch reads MPTTFHEIPRKRPTTPLLDRAQ. Thiamine diphosphate is bound by residues His-87 and 128–130; that span reads GHS. Position 159 (Asp-159) interacts with Mg(2+). Thiamine diphosphate contacts are provided by residues 160–161, Asn-188, Phe-295, and Glu-378; that span reads GA. Asn-188 is a Mg(2+) binding site.

It belongs to the transketolase family. DXPS subfamily. Homodimer. The cofactor is Mg(2+). Thiamine diphosphate serves as cofactor.

It catalyses the reaction D-glyceraldehyde 3-phosphate + pyruvate + H(+) = 1-deoxy-D-xylulose 5-phosphate + CO2. It functions in the pathway metabolic intermediate biosynthesis; 1-deoxy-D-xylulose 5-phosphate biosynthesis; 1-deoxy-D-xylulose 5-phosphate from D-glyceraldehyde 3-phosphate and pyruvate: step 1/1. In terms of biological role, catalyzes the acyloin condensation reaction between C atoms 2 and 3 of pyruvate and glyceraldehyde 3-phosphate to yield 1-deoxy-D-xylulose-5-phosphate (DXP). The protein is 1-deoxy-D-xylulose-5-phosphate synthase of Pseudomonas fluorescens (strain ATCC BAA-477 / NRRL B-23932 / Pf-5).